Here is a 207-residue protein sequence, read N- to C-terminus: Large ribosomal subunit protein uL4 (207 aa).

Residues lysine 62–glycine 85 form a disordered region.

The protein belongs to the universal ribosomal protein uL4 family. Part of the 50S ribosomal subunit.

Functionally, one of the primary rRNA binding proteins, this protein initially binds near the 5'-end of the 23S rRNA. It is important during the early stages of 50S assembly. It makes multiple contacts with different domains of the 23S rRNA in the assembled 50S subunit and ribosome. Its function is as follows. Forms part of the polypeptide exit tunnel. The polypeptide is Large ribosomal subunit protein uL4 (Geobacter sp. (strain M21)).